The primary structure comprises 1183 residues: MGLLQGQLTHALACRHCSSITCLHSPGNLAILVLFMVWQIRRWWQLRGWQQLQPWCSGDKMTQGKGLQLLYHLAFFDCLWKQKSEEEEKEEKECLSLNPLKPYHLSKDTPIGNGFSTAPPHPSCRSEGRPRATETQEQVLIQSPSPSRSFPTFQTLTNLPVRSKRASGSSPQQTKLQLFSGLPSLYNESLKTIFLSSDGPSPLKLSICPSVFLNKVPFPPAYNLLLPCYHSSTYYPTPEAHILEDLEEIAPGSQLVQSPPSPPIPLVSSNLKPLLKGYKRIIPDTEVHTQWFTQNKEVPSVSENQGLYPQPELQKFRSSTFLYSSEVWRKRPGDLRLHQHNPELPFAFLLYPFNPQEVLDRFEMPWRNMKQNEHPKASETAMPTASPLPISLTECQRVNPTGDLSQVKTLCQTTVQKENLQIYELPISAPCQLTVPVTEGTGPPGTPPGYEAQWGILAYKGIPQASDPLMPASCHPSGSLSKVKNVNPKERLSAPKDVRENLGYREHPHVSKSPVSAPSPPLDTLSDYQRENPPEDGSGFKPQWECKETSGSPWASETPTLDFHVGFYEATPMCVPLGSEAQLKGTPSTENLCVYADIVSSPSLPSVSLPDFAIMGPQRILLESKALWETKEQKKHLWTSDSSCPHKTPLAPFIGPKRINTVDDVPRSEATGKNTDNTKKCSSSEPPFLNLNPSPALVQQPLRVSPIENPLKSKAWCGHIQRKNNFLASELPAQSLSQHLLEPSPEGVLSDVEPAGGFMKNKNHCVSASPVWECSPSPNSVLKFHISEPSGDQCNCTPKESVAEWTKDSWANELPGSSFFSALSQEPHSETELVCRNVLEREASQGPNPPAVNPPQPTAWPIQPGLSEAKAEAPSSQGEAVSEVSDHPVIHAWQWSRQLKLRLNKLQQSPTFKSPGSHHSFSSSPVLNLTLESWGPSSCSQQMHPLSLHPCSSSSHPPKVQRAEALPVQAPHCLHSSSQPQAQASGRAEQRSQKSKRLKRKAMVQIPSPGLGHVKADENCSGMGEPSDTGLLVSGKRQDKTLVLLSTQKRGSSRKSKAEKCGRTARLGSPTNTRENNPAQACRPAEASMPRFSRKFEHKAQSSPHSALAQQLLPNAAGPQDRPRTGLVAGETQNPCPFKCCPWIPTKQQLSSLSQEAPPTRGFQKLIDKFLGVHRPLPTKSSP.

Disordered regions lie at residues 109 to 153 (TPIG…FPTF), 469 to 555 (LMPA…SPWA), 661 to 686 (TVDDVPRSEATGKNTDNTKKCSSSEP), 843 to 884 (ASQG…VSEV), 973 to 1032 (CLHS…TGLL), and 1048 to 1087 (QKRGSSRKSKAEKCGRTARLGSPTNTRENNPAQACRPAEA). Over residues 124–134 (CRSEGRPRATE) the composition is skewed to basic and acidic residues. Over residues 135 to 153 (TQEQVLIQSPSPSRSFPTF) the composition is skewed to polar residues. Residues 487-509 (NPKERLSAPKDVRENLGYREHPH) are compositionally biased toward basic and acidic residues. Residues 671 to 685 (TGKNTDNTKKCSSSE) are compositionally biased toward polar residues. Over residues 847–858 (PNPPAVNPPQPT) the composition is skewed to pro residues. Residues 975–984 (HSSSQPQAQA) show a composition bias toward polar residues. The segment covering 993-1002 (QKSKRLKRKA) has biased composition (basic residues). Residues 1069–1079 (SPTNTRENNPA) show a composition bias toward polar residues.

Expressed in kidney and testis. Expressed at lower levels in stomach, intestine, epididymis and ovary. Expressed at very low levels in heart and spleen.

Functionally, dispensable for normal development and fertility. The sequence is that of Spermatogenesis-associated protein 31G1 (Spata31g1) from Mus musculus (Mouse).